The sequence spans 500 residues: MSDFYWLTIIVVLPISAGSLIALLPHRGNKVVRWYTICICLFELLLTTYVFCYHFKLDDPLIQLEEDFNWINLFDFHWRLGIDGLSIGPILLTGFITTLATSAAWPVTRNSRLFHFLMLAMYSGQIGSFSSRDLLLFFIMWELELIPVYLLLSMWGGKKRLYSATKFILYTAGGSIFLLMGVLGMGLYGSNEPTLNFETLANQSYPVALEIIFYFGFLIAYAVKSPIIPLHTWLPDTHGEAHYSTCMLLAGILLKMGAYGLVRVNMELLPHAHSIFSPWLMIVGTIQIIYAALTSPGQRNLKKRIAYSSVSHMGFIIIGISSITDAGLNGAILQIISHGFIGAALFFLAGTSYDRIRLRYLNEMGGIAILMPRIFTMFSSFSMASLALPGMSGFVAEFVIFLGIITSPKYLVMSKILITFVMAIGMILTPIYSLSMSRQMFYGYRLFNVPKSHFVDSGPREIFIFMCILLPIIGIGIYPDFVLSLSVDKVETILSNYFHG.

15 helical membrane-spanning segments follow: residues 4-24, 35-55, 80-100, 113-130, 134-154, 167-187, 208-228, 242-262, 274-294, 305-325, 330-350, 364-384, 386-406, 416-436, and 462-482; these read FYWL…IALL, YTIC…CYHF, LGID…TTLA, LFHF…GSFS, LLLF…LLSM, FILY…GMGL, ALEI…SPII, HYST…YGLV, SIFS…AALT, IAYS…SITD, GAIL…FLAG, MGGI…FSMA, LALP…GIIT, ILIT…SLSM, and IFIF…PDFV.

This sequence belongs to the complex I subunit 4 family.

The protein resides in the plastid. It is found in the chloroplast thylakoid membrane. The enzyme catalyses a plastoquinone + NADH + (n+1) H(+)(in) = a plastoquinol + NAD(+) + n H(+)(out). It carries out the reaction a plastoquinone + NADPH + (n+1) H(+)(in) = a plastoquinol + NADP(+) + n H(+)(out). This Nymphaea alba (White water-lily) protein is NAD(P)H-quinone oxidoreductase chain 4, chloroplastic.